The sequence spans 88 residues: Small ribosomal subunit protein uS15 (88 aa).

It belongs to the universal ribosomal protein uS15 family. In terms of assembly, part of the 30S ribosomal subunit. Forms a bridge to the 50S subunit in the 70S ribosome, contacting the 23S rRNA.

Its function is as follows. One of the primary rRNA binding proteins, it binds directly to 16S rRNA where it helps nucleate assembly of the platform of the 30S subunit by binding and bridging several RNA helices of the 16S rRNA. Functionally, forms an intersubunit bridge (bridge B4) with the 23S rRNA of the 50S subunit in the ribosome. In Mycoplasmopsis synoviae (strain 53) (Mycoplasma synoviae), this protein is Small ribosomal subunit protein uS15.